A 388-amino-acid polypeptide reads, in one-letter code: Glutamine transporter 2 (388 aa).

11 helical membrane-spanning segments follow: residues 5 to 27 (LFGS…IPMV), 31 to 53 (FGLF…AALL), 86 to 106 (LFYL…ADLI), 121 to 141 (FAQV…TQII), 147 to 167 (LLFF…IPGM), 186 to 206 (TSTI…LVAY), 218 to 238 (MVIL…YAVV), 268 to 288 (IILS…VAMA), 302 to 322 (IVTY…AADQ), 326 to 346 (VLGY…LAMV), and 368 to 388 (GGKL…ISQI).

It belongs to the amino acid/polyamine transporter 2 family.

It is found in the cell inner membrane. In terms of biological role, seems to be involved in glutamine transport. Complements an E.coli glnP deletion mutant. This is Glutamine transporter 2 from Aliivibrio fischeri (strain ATCC 700601 / ES114) (Vibrio fischeri).